A 250-amino-acid chain; its full sequence is Methionine aminopeptidase (250 aa).

His77 is a binding site for substrate. A divalent metal cation is bound by residues Asp95, Asp106, and His169. His176 lines the substrate pocket. A divalent metal cation-binding residues include Glu202 and Glu233.

It belongs to the peptidase M24A family. Methionine aminopeptidase type 1 subfamily. As to quaternary structure, monomer. Requires Co(2+) as cofactor. The cofactor is Zn(2+). It depends on Mn(2+) as a cofactor. Fe(2+) serves as cofactor.

It carries out the reaction Release of N-terminal amino acids, preferentially methionine, from peptides and arylamides.. Removes the N-terminal methionine from nascent proteins. The N-terminal methionine is often cleaved when the second residue in the primary sequence is small and uncharged (Met-Ala-, Cys, Gly, Pro, Ser, Thr, or Val). Requires deformylation of the N(alpha)-formylated initiator methionine before it can be hydrolyzed. In Clostridium acetobutylicum (strain ATCC 824 / DSM 792 / JCM 1419 / IAM 19013 / LMG 5710 / NBRC 13948 / NRRL B-527 / VKM B-1787 / 2291 / W), this protein is Methionine aminopeptidase.